The sequence spans 428 residues: Adenylosuccinate synthetase 1 (428 aa).

Residues 12–18 (GDEGKGK) and 40–42 (GHT) each bind GTP. The active-site Proton acceptor is the Asp-13. 2 residues coordinate Mg(2+): Asp-13 and Gly-40. IMP is bound by residues 13–16 (DEGK), 38–41 (NAGH), Thr-133, Arg-147, Asn-224, Thr-239, and Arg-303. The active-site Proton donor is the His-41. 299–305 (TTTGRRR) is a binding site for substrate. Residues Arg-305, 331 to 333 (KLD), and 413 to 415 (GVG) each bind GTP.

The protein belongs to the adenylosuccinate synthetase family. As to quaternary structure, homodimer. Mg(2+) serves as cofactor.

It is found in the cytoplasm. It carries out the reaction IMP + L-aspartate + GTP = N(6)-(1,2-dicarboxyethyl)-AMP + GDP + phosphate + 2 H(+). It participates in purine metabolism; AMP biosynthesis via de novo pathway; AMP from IMP: step 1/2. In terms of biological role, plays an important role in the de novo pathway and in the salvage pathway of purine nucleotide biosynthesis. Catalyzes the first committed step in the biosynthesis of AMP from IMP. The polypeptide is Adenylosuccinate synthetase 1 (Laccaria bicolor (strain S238N-H82 / ATCC MYA-4686) (Bicoloured deceiver)).